Here is a 559-residue protein sequence, read N- to C-terminus: MGSTEFSWKLADHPKLPKGKTLAMVVLDGWGEASANQYNCIHVAETPTMDSLKQGAPEKWRLIRAHGKAVGLPTEDDMGNSEVGHNALGAGRIYAQGAKLVDLALESGKIYDGEGFNYIKESFETNTLHLIGLLSDGGVHSRLDQLQLLLKGSAERGAKRIRVHILTDGRDVLDGSSVGFVETLENDLAQLRAKGVDAQIASGGGRMYVTMDRYENDWSVVKRGWDAQVLGEAPYKFKNAVEAVKTLRQEPKANDQYLPPFVVVDESGKAVGPIVDGDAVVTLNFRADRMVMLAKALEYEDFDKFDRVRFPKIRYAGMLQYDGELKLPNRYLVSPPEIERTSGEYLVHNGVRTFACSETVKFGHVTFFWNGNRSGYFKPEMEEYVEIPSDSGITFNVQPKMKALEIAEKARDAILSGKFDQVRVNLPNSDMVGHTGDIEATVVACKAADEAVKMIIDAIEQVGGIYVITADHGNAEDMVKRDKKGQPAMDKNGNIQILTSHTLEPVPIAIGGPGLTPGVRFRNDIPTGGLANVAATVMNLHGFEAPSDYEPTLIEVVSN.

Mn(2+) contacts are provided by D28 and S81. Catalysis depends on S81, which acts as the Phosphoserine intermediate. Substrate-binding positions include H140, 170-171 (RD), R206, R213, 286-289 (RADR), and K361. Mn(2+) is bound by residues D430, H434, D471, H472, and H501.

The protein belongs to the BPG-independent phosphoglycerate mutase family. As to quaternary structure, monomer. Requires Mn(2+) as cofactor.

The protein resides in the cytoplasm. The catalysed reaction is (2R)-2-phosphoglycerate = (2R)-3-phosphoglycerate. The protein operates within carbohydrate degradation; glycolysis; pyruvate from D-glyceraldehyde 3-phosphate: step 3/5. Its function is as follows. Catalyzes the interconversion of 2-phosphoglycerate and 3-phosphoglycerate. The polypeptide is 2,3-bisphosphoglycerate-independent phosphoglycerate mutase (PGM1) (Mesembryanthemum crystallinum (Common ice plant)).